Here is a 463-residue protein sequence, read N- to C-terminus: DNA polymerase subunit gamma-2, mitochondrial (463 aa).

The N-terminal 44 residues, 1–44 (MLLTLKNTGQLLVAACSKVARSLAKYHPRVNHHRHCVWCSKRGL), are a transit peptide targeting the mitochondrion.

Heterotrimer composed of a catalytic subunit and a homodimer of accessory subunits.

The protein resides in the mitochondrion. Its function is as follows. Mitochondrial polymerase processivity subunit. It regulates the polymerase and exonuclease activities promoting processive DNA synthesis. Binds to ss-DNA. In Xenopus laevis (African clawed frog), this protein is DNA polymerase subunit gamma-2, mitochondrial (polg2).